Consider the following 118-residue polypeptide: ATP synthase subunit gamma, chloroplastic (118 aa).

Cysteines 30 and 36 form a disulfide.

The protein belongs to the ATPase gamma chain family. As to quaternary structure, F-type ATPases have 2 components, CF(1) - the catalytic core - and CF(0) - the membrane proton channel. CF(1) has five subunits: alpha(3), beta(3), gamma(1), delta(1), epsilon(1). CF(0) has four main subunits: a, b, b' and c.

It localises to the plastid. Its subcellular location is the chloroplast thylakoid membrane. Its function is as follows. Produces ATP from ADP in the presence of a proton gradient across the membrane. The gamma chain is believed to be important in regulating ATPase activity and the flow of protons through the CF(0) complex. In terms of biological role, inceptin is a proteolytic fragment produced by insect larvae that previously ingested the protein. This peptide mediate plant perception of herbivory through the induction of volatile, phenylpropanoid and protease inhibitor defenses such as ethylene, jasmonic acid and salicylic acid for example. This is ATP synthase subunit gamma, chloroplastic from Vigna unguiculata (Cowpea).